A 1025-amino-acid chain; its full sequence is Multidrug resistance protein MdtC (1025 aa).

12 consecutive transmembrane segments (helical) span residues 3–23 (FFAL…AITL), 333–353 (EVEQ…FLFL), 360–380 (IIPA…MYLC), 387–407 (LSLM…IVVL), 431–451 (VGFT…PLLL), 463–483 (FAVT…TLTP), 528–548 (LVGV…ISIP), 853–873 (VILI…LYES), 875–895 (VHPL…LLAL), 897–917 (LFNA…IGIV), 953–973 (PIMM…LSGG), and 984–1004 (ITIV…TPVV).

It belongs to the resistance-nodulation-cell division (RND) (TC 2.A.6) family. MdtC subfamily. As to quaternary structure, part of a tripartite efflux system composed of MdtA, MdtB and MdtC. MdtC forms a heteromultimer with MdtB.

The protein resides in the cell inner membrane. This Shigella boydii serotype 4 (strain Sb227) protein is Multidrug resistance protein MdtC.